The primary structure comprises 86 residues: Cell division topological specificity factor (86 aa).

The protein belongs to the MinE family.

Prevents the cell division inhibition by proteins MinC and MinD at internal division sites while permitting inhibition at polar sites. This ensures cell division at the proper site by restricting the formation of a division septum at the midpoint of the long axis of the cell. This Stenotrophomonas maltophilia (strain R551-3) protein is Cell division topological specificity factor.